Here is a 199-residue protein sequence, read N- to C-terminus: Small ribosomal subunit protein uS14m (199 aa).

Residues Leu28–Gln67 form a disordered region.

This sequence belongs to the universal ribosomal protein uS14 family. In terms of assembly, component of the mitochondrial ribosome small subunit (28S) which comprises a 12S rRNA and about 30 distinct proteins. Interacts with LIAT1.

It is found in the mitochondrion. The protein is Small ribosomal subunit protein uS14m (mrps-14) of Caenorhabditis elegans.